The following is a 312-amino-acid chain: Glyoxylate/hydroxypyruvate reductase A (312 aa).

R227 is an active-site residue. The active-site Proton donor is the H275.

Belongs to the D-isomer specific 2-hydroxyacid dehydrogenase family. GhrA subfamily.

The protein resides in the cytoplasm. It catalyses the reaction glycolate + NADP(+) = glyoxylate + NADPH + H(+). It carries out the reaction (R)-glycerate + NAD(+) = 3-hydroxypyruvate + NADH + H(+). The catalysed reaction is (R)-glycerate + NADP(+) = 3-hydroxypyruvate + NADPH + H(+). Functionally, catalyzes the NADPH-dependent reduction of glyoxylate and hydroxypyruvate into glycolate and glycerate, respectively. In Citrobacter koseri (strain ATCC BAA-895 / CDC 4225-83 / SGSC4696), this protein is Glyoxylate/hydroxypyruvate reductase A.